The sequence spans 500 residues: Trehalose-6-phosphate synthase (500 aa).

Residue Arg28 coordinates D-glucose 6-phosphate. Position 48–49 (48–49) interacts with UDP-alpha-D-glucose; sequence GG. The D-glucose 6-phosphate site is built by Tyr104 and Asp158. 2 residues coordinate UDP-alpha-D-glucose: Arg300 and Lys305. A D-glucose 6-phosphate-binding site is contributed by Arg338. Residue 403–407 participates in UDP-alpha-D-glucose binding; it reads LVAKE.

Belongs to the glycosyltransferase 20 family. As to quaternary structure, homotetramer.

The enzyme catalyses ADP-alpha-D-glucose + D-glucose 6-phosphate = alpha,alpha-trehalose 6-phosphate + ADP + H(+). The catalysed reaction is CDP-alpha-D-glucose + D-glucose 6-phosphate = alpha,alpha-trehalose 6-phosphate + CDP + H(+). It catalyses the reaction GDP-alpha-D-glucose + D-glucose 6-phosphate = alpha,alpha-trehalose 6-phosphate + GDP + H(+). It carries out the reaction TDP-alpha-D-glucose + D-glucose 6-phosphate = 5-methyl-UDP + alpha,alpha-trehalose 6-phosphate + H(+). The enzyme catalyses D-glucose 6-phosphate + UDP-alpha-D-glucose = alpha,alpha-trehalose 6-phosphate + UDP + H(+). Its pathway is glycan biosynthesis; trehalose biosynthesis. In terms of biological role, probably involved in the osmoprotection via the biosynthesis of trehalose and in the production of glycogen and alpha-glucan via the TreS-Pep2 branch involved in the biosynthesis of maltose-1-phosphate (M1P). Catalyzes the transfer of glucose from UDP-glucose (UDP-Glc) to D-glucose 6-phosphate (Glc-6-P) to form trehalose-6-phosphate. Probably also able to use ADP-Glc, CDP-Glc, GDP-Glc and TDP-Glc as glucosyl donors. In Mycobacterium ulcerans (strain Agy99), this protein is Trehalose-6-phosphate synthase.